Reading from the N-terminus, the 226-residue chain is 2-C-methyl-D-erythritol 4-phosphate cytidylyltransferase (226 aa).

The protein belongs to the IspD/TarI cytidylyltransferase family. IspD subfamily.

It carries out the reaction 2-C-methyl-D-erythritol 4-phosphate + CTP + H(+) = 4-CDP-2-C-methyl-D-erythritol + diphosphate. Its pathway is isoprenoid biosynthesis; isopentenyl diphosphate biosynthesis via DXP pathway; isopentenyl diphosphate from 1-deoxy-D-xylulose 5-phosphate: step 2/6. Functionally, catalyzes the formation of 4-diphosphocytidyl-2-C-methyl-D-erythritol from CTP and 2-C-methyl-D-erythritol 4-phosphate (MEP). The protein is 2-C-methyl-D-erythritol 4-phosphate cytidylyltransferase of Rhodococcus jostii (strain RHA1).